Here is a 498-residue protein sequence, read N- to C-terminus: Cysteine--tRNA ligase (498 aa).

Cys44 is a Zn(2+) binding site. A 'HIGH' region motif is present at residues 46–56 (PTVYSDAHLGH). 3 residues coordinate Zn(2+): Cys235, His260, and Glu264. The 'KMSKS' region motif lies at 291 to 295 (KMSKS). Residue Lys294 coordinates ATP.

This sequence belongs to the class-I aminoacyl-tRNA synthetase family. In terms of assembly, monomer. Zn(2+) is required as a cofactor.

The protein localises to the cytoplasm. The catalysed reaction is tRNA(Cys) + L-cysteine + ATP = L-cysteinyl-tRNA(Cys) + AMP + diphosphate. The sequence is that of Cysteine--tRNA ligase (cysS) from Deinococcus radiodurans (strain ATCC 13939 / DSM 20539 / JCM 16871 / CCUG 27074 / LMG 4051 / NBRC 15346 / NCIMB 9279 / VKM B-1422 / R1).